Here is a 239-residue protein sequence, read N- to C-terminus: MATLGVNIDHIATIRQARRTVEPDPVAAAVLAELGGADGITVHLREDRRHIQDRDVQLLRHTVRTHLNLEMAATDEMVGIALDIKPDYVTLVPEKREEVTTEGGLDIVGQIARIGEVVSKLQNAAIPVSLFIDAEPSQIEASVKVQAKFIELHTGRYAEATDETSRQQELAFLAAGCEQAIKAGLRVNAGHGLTYWNVYPVAALPGMEELNIGHTIISRAALVGIERAVREMKQAIRGE.

Asparagine 7 contacts 3-amino-2-oxopropyl phosphate. 9–10 (DH) serves as a coordination point for 1-deoxy-D-xylulose 5-phosphate. Arginine 18 is a binding site for 3-amino-2-oxopropyl phosphate. Histidine 43 (proton acceptor) is an active-site residue. 1-deoxy-D-xylulose 5-phosphate contacts are provided by arginine 45 and histidine 50. Glutamate 70 acts as the Proton acceptor in catalysis. 1-deoxy-D-xylulose 5-phosphate is bound at residue threonine 100. The active-site Proton donor is the histidine 191. Residues glycine 192 and 213-214 (GH) each bind 3-amino-2-oxopropyl phosphate.

Belongs to the PNP synthase family. In terms of assembly, homooctamer; tetramer of dimers.

It localises to the cytoplasm. It carries out the reaction 3-amino-2-oxopropyl phosphate + 1-deoxy-D-xylulose 5-phosphate = pyridoxine 5'-phosphate + phosphate + 2 H2O + H(+). It functions in the pathway cofactor biosynthesis; pyridoxine 5'-phosphate biosynthesis; pyridoxine 5'-phosphate from D-erythrose 4-phosphate: step 5/5. In terms of biological role, catalyzes the complicated ring closure reaction between the two acyclic compounds 1-deoxy-D-xylulose-5-phosphate (DXP) and 3-amino-2-oxopropyl phosphate (1-amino-acetone-3-phosphate or AAP) to form pyridoxine 5'-phosphate (PNP) and inorganic phosphate. This Nostoc sp. (strain PCC 7120 / SAG 25.82 / UTEX 2576) protein is Pyridoxine 5'-phosphate synthase.